The chain runs to 287 residues: MAAPRQIPSHIVRLKPSCSTDSSFTRTPVPTVSLASRELPVSSWQVTEPSSKNLWEQICKEYEAEQPPFPEGYKVKQEPVITVAPVEEMLFHGFSAEHYFPVSHFTMISRTPCPQDKSETINPKTCSPKEYLETFIFPVLLPGMASLLHQAKKEKCFERKRTKFIACDFLTEWLYNQNPKRAGEPFTEFFSIPFVEERLKQHPRPPIPLSLLLTEEEAALYIQSFWRACVVRCDPEIQELRQWQKKLREAKHIHQQVKIFWAKQEQKVKCKMEDDAVPAAKMKIPSS.

This chain is IQ domain-containing protein K (IQCK), found in Homo sapiens (Human).